An 84-amino-acid polypeptide reads, in one-letter code: uncharacterized protein (84 aa).

Positions 5–31 form a coiled coil; the sequence is KIQEIINELDNLMNRERKYIELVATVE.

This is an uncharacterized protein from Methanocaldococcus jannaschii (strain ATCC 43067 / DSM 2661 / JAL-1 / JCM 10045 / NBRC 100440) (Methanococcus jannaschii).